The following is a 206-amino-acid chain: Transmembrane emp24 domain-containing protein bai (206 aa).

The signal sequence occupies residues 1–20; it reads MARTLLILCTLMAWAWTGEA. The Lumenal segment spans residues 21-172; the sequence is VMFKLTPNTQ…RDTNEKTNSR (152 aa). The 111-residue stretch at 30 to 140 folds into the GOLD domain; it reads QKCLKEDIQA…LKPLEVDLKR (111 aa). Residues 173-193 form a helical membrane-spanning segment; sequence VLFFSIFSMCCLLGLATWQVL. At 194-206 the chain is on the cytoplasmic side; it reads YLRRYFKAKKLIE.

This sequence belongs to the EMP24/GP25L family.

The protein resides in the membrane. Functionally, eca and bai are essential, though not redundant, for dorsoventral patterning of the embryo. Specifically required during early embryogenesis for the activity of maternal tkv, while the zygotic tkv is not affected. The chain is Transmembrane emp24 domain-containing protein bai from Drosophila ananassae (Fruit fly).